We begin with the raw amino-acid sequence, 720 residues long: Ciliated left-right organizer metallopeptidase (720 aa).

An N-terminal signal peptide occupies residues 1-25; that stretch reads MTVSFSMFQIYRLVWLSFMTSMCLS. Topologically, residues 26–668 are extracellular; sequence ACIHDSVLQE…ALYVSHMLYS (643 aa). Zn(2+) is bound at residue H243. Residue E244 is part of the active site. Zn(2+) contacts are provided by H247 and H322. The helical transmembrane segment at 669 to 689 threads the bilayer; it reads YVIGGGCCAVCGAAIIFALFW. The Cytoplasmic segment spans residues 690–720; it reads YKLRRQFLRVGSSYPPETSNHERPQIPADLV.

Belongs to the peptidase M8 family. Requires Zn(2+) as cofactor.

It localises to the membrane. Its function is as follows. Putative metalloprotease playing a role in the process of LR patterning. This chain is Ciliated left-right organizer metallopeptidase (cirop), found in Xenopus laevis (African clawed frog).